A 429-amino-acid chain; its full sequence is Protein S-Myc (429 aa).

Y36 carries the post-translational modification Phosphotyrosine; by Tyr-kinases. The tract at residues 301–325 (PLPYAEDARPLKKPRSQDPLGPLKC) is disordered. A bHLH domain is found at 346 to 398 (ERRRNHNRMERQRRDIMRSSFLNLRDLVPELVHNEKAAKVVILKKATEYIHTL). A leucine-zipper region spans residues 398 to 419 (LQTDESKLLVEREKLYERKQQL).

As to quaternary structure, efficient DNA binding requires dimerization with another bHLH protein.

The protein resides in the nucleus. In terms of biological role, has apoptosis-inducing activity. This is Protein S-Myc (Mycs) from Rattus norvegicus (Rat).